The primary structure comprises 250 residues: MGQKSNPNGLRLGIIRTWESKWYDVDKKVPFLVGEDFKIRPLIKNHYPKSTISQIEIKRLKKSNDEFIEIDLYTSKIGIIQGPENKNKNSLINKIEKLINKKVQINIFEVKAINKIAVLVAQNIAMQLQQRAFYKAVLKSAIQKALKSGVKGIKIIITGRLGGAEKARRDSISMGVVPLNTLRADIDYAFEEAHTTYGVLGVKVIINHGEVLPNKTIADTRQIFSSQYENKKNNNKRHFADKKNFKKSTS.

The KH type-2 domain maps to 39–111; the sequence is IRPLIKNHYP…KVQINIFEVK (73 aa).

Belongs to the universal ribosomal protein uS3 family. As to quaternary structure, part of the 30S ribosomal subunit. Forms a tight complex with proteins S10 and S14.

Functionally, binds the lower part of the 30S subunit head. Binds mRNA in the 70S ribosome, positioning it for translation. The protein is Small ribosomal subunit protein uS3 of Ziziphus jujuba witches'-broom phytoplasma.